The chain runs to 101 residues: Small ribosomal subunit protein uS14 (101 aa).

The segment covering 1-11 (MAKKSSVEKNN) has biased composition (basic and acidic residues). The tract at residues 1–22 (MAKKSSVEKNNRRQRMVKNAAA) is disordered. Over residues 12–22 (RRQRMVKNAAA) the composition is skewed to basic residues.

It belongs to the universal ribosomal protein uS14 family. Part of the 30S ribosomal subunit. Contacts proteins S3 and S10.

Functionally, binds 16S rRNA, required for the assembly of 30S particles and may also be responsible for determining the conformation of the 16S rRNA at the A site. This is Small ribosomal subunit protein uS14 from Afipia carboxidovorans (strain ATCC 49405 / DSM 1227 / KCTC 32145 / OM5) (Oligotropha carboxidovorans).